Consider the following 358-residue polypeptide: MKKILALLVIAPLLVSCSGNKNQVENEVFVKDTNGFEILMGQFAHNIENIWGLKEVLIAGPKDYVKYTDQYQTRSHINFDAGTITIETIATTNPAAHLRQAIITTLLMGDDPGSIDLYSDVNDIQISKEPFLYGQVLDNNGEPIRWEWRAAHFADYLLQNKMQTRTSGLHVISFVTIQLVPNHLDKRAHKYLPLVRKSAARYGVEESLILAIMQTESSFNPYAVSRSDALGLMQVVQHTAGKDVFKLKGKSGQPSRSYLFDPENNIDAGTAYLSILQNTYLGGIQNATSRRYAVITSYNGGAGSVLRVFHSDKNKAVGIINTMSPGDVFQTLTTKHPSGESRRYLVKVNSAQKNYRRY.

The first 16 residues, 1-16 (MKKILALLVIAPLLVS), serve as a signal peptide directing secretion. Residue Cys-17 is the site of N-palmitoyl cysteine attachment. Cys-17 carries S-diacylglycerol cysteine lipidation.

The protein belongs to the transglycosylase Slt family.

The protein localises to the cell outer membrane. The enzyme catalyses Exolytic cleavage of the (1-&gt;4)-beta-glycosidic linkage between N-acetylmuramic acid (MurNAc) and N-acetylglucosamine (GlcNAc) residues in peptidoglycan, from either the reducing or the non-reducing ends of the peptidoglycan chains, with concomitant formation of a 1,6-anhydrobond in the MurNAc residue.. Functionally, murein-degrading enzyme. May play a role in recycling of muropeptides during cell elongation and/or cell division. This chain is Membrane-bound lytic murein transglycosylase C, found in Yersinia pseudotuberculosis serotype O:1b (strain IP 31758).